The following is a 1159-amino-acid chain: WASH complex subunit 5 (1159 aa).

It belongs to the strumpellin family. As to quaternary structure, component of the WASH core complex also described as WASH regulatory complex (SHRC) composed of WASH (WASHC1, WASH2P or WASH3P), WASHC2 (WASHC2A or WASHC2C), WASHC3, WASHC4 and WASHC5. The WASH core complex associates via WASHC2 with the F-actin-capping protein dimer (formed by CAPZA1, CAPZA2 or CAPZA3 and CAPZB) in a transient or substoichiometric manner which was initially described as WASH complex. Interacts with VCP, PI4K2A.

It is found in the cytoplasm. It localises to the cytosol. The protein localises to the endoplasmic reticulum. The protein resides in the early endosome. In terms of biological role, acts as a component of the WASH core complex that functions as a nucleation-promoting factor (NPF) at the surface of endosomes, where it recruits and activates the Arp2/3 complex to induce actin polymerization, playing a key role in the fission of tubules that serve as transport intermediates during endosome sorting. May be involved in axonal outgrowth. Involved in cellular localization of ADRB2. Involved in cellular trafficking of BLOC-1 complex cargos such as ATP7A and VAMP7. Involved in cytokinesis and following polar body extrusion during oocyte meiotic maturation. This is WASH complex subunit 5 from Mus musculus (Mouse).